Here is a 424-residue protein sequence, read N- to C-terminus: Hemagglutinin-esterase (424 aa).

A signal peptide spans Met-1–Ser-16. Residues Phe-7 to Gly-127 form an esterase domain 1 region. Residues Leu-17–Ile-392 lie on the Virion surface side of the membrane. Ser-40 acts as the Nucleophile in catalysis. Cys-44 and Cys-65 form a disulfide bridge. Residues Asn-54, Asn-89, Asn-153, Asn-236, and Asn-301 are each glycosylated (N-linked (GlcNAc...) asparagine; by host). 3 disulfides stabilise this stretch: Cys-113–Cys-162, Cys-197–Cys-276, and Cys-205–Cys-249. The segment at Leu-128 to Leu-266 is receptor binding. Positions Leu-267–Thr-379 are esterase domain 2. Cysteines 307 and 312 form a disulfide. Asn-316 carries an N-linked (GlcNAc...) asparagine; by host glycan. Active-site charge relay system residues include Asp-326 and His-329. Residues Cys-347 and Cys-371 are joined by a disulfide bond. A glycan (N-linked (GlcNAc...) asparagine; by host) is linked at Asn-358. Residues Ile-393 to Phe-413 traverse the membrane as a helical segment. Residues Met-414 to Ala-424 lie on the Intravirion side of the membrane. An N-linked (GlcNAc...) asparagine; by host glycan is attached at Asn-417.

The protein belongs to the influenza type C/coronaviruses hemagglutinin-esterase family. Homodimer; disulfide-linked. Forms a complex with the M protein in the pre-Golgi. Associates then with S-M complex to form a ternary complex S-M-HE. In terms of processing, N-glycosylated in the host RER.

It localises to the virion membrane. It is found in the host cell membrane. The enzyme catalyses N-acetyl-9-O-acetylneuraminate + H2O = N-acetylneuraminate + acetate + H(+). It catalyses the reaction N-acetyl-4-O-acetylneuraminate + H2O = N-acetylneuraminate + acetate + H(+). Functionally, structural protein that makes short spikes at the surface of the virus. Contains receptor binding and receptor-destroying activities. Mediates de-O-acetylation of N-acetyl-4-O-acetylneuraminic acid, which is probably the receptor determinant recognized by the virus on the surface of erythrocytes and susceptible cells. This receptor-destroying activity is important for virus release as it probably helps preventing self-aggregation and ensures the efficient spread of the progeny virus from cell to cell. May serve as a secondary viral attachment protein for initiating infection, the spike protein being the major one. May become a target for both the humoral and the cellular branches of the immune system. This Bovine coronavirus (strain LSU-94LSS-051) (BCoV-LSU) protein is Hemagglutinin-esterase.